The following is a 403-amino-acid chain: Tryptophan synthase beta chain 1 (403 aa).

The residue at position 93 (K93) is an N6-(pyridoxal phosphate)lysine.

Belongs to the TrpB family. Tetramer of two alpha and two beta chains. The cofactor is pyridoxal 5'-phosphate.

The catalysed reaction is (1S,2R)-1-C-(indol-3-yl)glycerol 3-phosphate + L-serine = D-glyceraldehyde 3-phosphate + L-tryptophan + H2O. It functions in the pathway amino-acid biosynthesis; L-tryptophan biosynthesis; L-tryptophan from chorismate: step 5/5. In terms of biological role, the beta subunit is responsible for the synthesis of L-tryptophan from indole and L-serine. This Methanosarcina acetivorans (strain ATCC 35395 / DSM 2834 / JCM 12185 / C2A) protein is Tryptophan synthase beta chain 1 (trpB1).